Reading from the N-terminus, the 334-residue chain is Stabilizer of axonemal microtubules 3 (334 aa).

Disordered regions lie at residues 81 to 105, 128 to 153, and 233 to 260; these read AYVP…PTRT, YQSS…YFGP, and QVWS…RVPR. Residues 128 to 141 show a composition bias toward polar residues; the sequence is YQSSETRAQYTGSP. Over residues 240 to 251 the composition is skewed to pro residues; the sequence is QRPPCPRSSRPP.

The protein is Stabilizer of axonemal microtubules 3 of Homo sapiens (Human).